Consider the following 297-residue polypeptide: Syntaxin-4 (297 aa).

Basic and acidic residues predominate over residues 1-12; sequence MRDRTHELRQGD. Positions 1–21 are disordered; that stretch reads MRDRTHELRQGDDSSDDEDKE. Topologically, residues 1–275 are cytoplasmic; it reads MRDRTHELRQ…QKKARKKKVF (275 aa). Phosphoserine occurs at positions 14 and 15. Phosphothreonine is present on Thr-31. 4 positions are modified to phosphoserine: Ser-36, Ser-117, Ser-208, and Ser-248. The stretch at 43–163 forms a coiled coil; sequence QKVRTIRQTI…ERIRRQLKIT (121 aa). A t-SNARE coiled-coil homology domain is found at 200-262; it reads LNEISARHSE…ERGQEHVKVA (63 aa). The chain crosses the membrane as a helical; Anchor for type IV membrane protein span at residues 276–296; sequence IAICLSITVLILVVIIVISTL. A topological domain (extracellular) is located at residue Val-297.

It belongs to the syntaxin family. Component of the SNARE complex composed of STX4, SNAP23 and VAMP7 that interacts with SYT7 during lysosomal exocytosis. Found in a complex with VAMP8 and SNAP23. Detected in a complex with SNAP23 and STXBP4. Interacts with VAMP2. Interacts with SNAP23 and SNAPIN. Interacts with LLGL1. Interacts (via C-terminus) with CENPF. Interacts with DOC2B. Interacts with STXBP6. Interacts with STXBP3; excludes interaction with DOC2B and SNAP25. Interacts with STXBP4; excludes interaction with VAMP2. Interacts with STXBP5L.

Its subcellular location is the cell membrane. It localises to the cell projection. The protein localises to the neuron projection. It is found in the stereocilium. In terms of biological role, plasma membrane t-SNARE that mediates docking of transport vesicles. Necessary for the translocation of SLC2A4 from intracellular vesicles to the plasma membrane. In neurons, recruited at neurite tips to membrane domains rich in the phospholipid 1-oleoyl-2-palmitoyl-PC (OPPC) which promotes neurite tip surface expression of the dopamine transporter SLC6A3/DAT by facilitating fusion of SLC6A3-containing transport vesicles with the plasma membrane. Together with STXB3 and VAMP2, may also play a role in docking/fusion of intracellular GLUT4-containing vesicles with the cell surface in adipocytes and in docking of synaptic vesicles at presynaptic active zones. Required for normal hearing. The polypeptide is Syntaxin-4 (STX4) (Bos taurus (Bovine)).